The chain runs to 98 residues: NADH-ubiquinone oxidoreductase chain 4L (98 aa).

Helical transmembrane passes span 1–21 (MPSI…GTLI), 26–46 (LMSS…LTSL), and 61–81 (IILL…LVMV).

Belongs to the complex I subunit 4L family. Core subunit of respiratory chain NADH dehydrogenase (Complex I) which is composed of 45 different subunits.

Its subcellular location is the mitochondrion inner membrane. It catalyses the reaction a ubiquinone + NADH + 5 H(+)(in) = a ubiquinol + NAD(+) + 4 H(+)(out). In terms of biological role, core subunit of the mitochondrial membrane respiratory chain NADH dehydrogenase (Complex I) which catalyzes electron transfer from NADH through the respiratory chain, using ubiquinone as an electron acceptor. Part of the enzyme membrane arm which is embedded in the lipid bilayer and involved in proton translocation. The sequence is that of NADH-ubiquinone oxidoreductase chain 4L (MT-ND4L) from Otolemur crassicaudatus (Brown greater galago).